A 315-amino-acid chain; its full sequence is MIKIYAPASIGNVGVGFDILGIAIKPIDKTLLGDCISIKPSKKFQLKNHGNFSKQLPVNIKENIIWKAWKYFNKKAKKKKTVKIVLEKNMPIGSGLGSSASSIVACVIALNKFYKTKLSKTKLLKIMGKLEGIISGEVHYDNVAPCYLGGLQLITNDQKNITQKLPIFTDWLWVIAWPGVTLSTSQARNILPLKYKKKTCIHNSRNLATFIHALYTKQSELAIRYMKDIIAEPYRIPLIPKFLISKKKIIELGALTCNISGSGPTLFSVCPNISIAKKVKIWLKKNYMENQTGFVHICKIDQSGARKMEKKNEII.

91–101 (PIGSGLGSSAS) is an ATP binding site.

This sequence belongs to the GHMP kinase family. Homoserine kinase subfamily.

It localises to the cytoplasm. It carries out the reaction L-homoserine + ATP = O-phospho-L-homoserine + ADP + H(+). The protein operates within amino-acid biosynthesis; L-threonine biosynthesis; L-threonine from L-aspartate: step 4/5. Functionally, catalyzes the ATP-dependent phosphorylation of L-homoserine to L-homoserine phosphate. In Buchnera aphidicola subsp. Cinara cedri (strain Cc), this protein is Homoserine kinase.